A 217-amino-acid chain; its full sequence is T-complex protein 10A homolog 1 (217 aa).

The interval 1–26 (MLAGQLEARDPKEGTHPEDPCPGAGA) is disordered. The span at 7–19 (EARDPKEGTHPED) shows a compositional bias: basic and acidic residues. Residues 69-110 (ADVHGKLRSHIDALREQNMELREKLRALQLQRWKARKKSAAS) adopt a coiled-coil conformation. The segment at 75–96 (LRSHIDALREQNMELREKLRAL) is leucine-zipper. Basic and acidic residues predominate over residues 175-192 (ERISSWKTPPQEKRDKSL). The tract at residues 175-217 (ERISSWKTPPQEKRDKSLSRRRQDRRATPTGRPTPCAERRGGV) is disordered.

Belongs to the TCP10 family. Self-associates (via leucine zipper). Interacts (via leucine zipper) with ZIPK/DAPK3 (via leucine zipper). Interacts with MAD4.

It is found in the nucleus. Its function is as follows. May be involved in transcriptional regulation. Has in vitro transcription inhibition activity. The chain is T-complex protein 10A homolog 1 (TCP10L) from Pan troglodytes (Chimpanzee).